We begin with the raw amino-acid sequence, 34 residues long: Papillosin (34 aa).

Functionally, has strong antibacterial activity against the Gram-positive bacteria M.luteus, S.aureus, B.megaterium, A.viridans and E.faecalis, and against the Gram-negative bacteria K.pneumoniae, E.coli DH5alpha, S.typhimurium, P.aeruginosa and E.aerogenes. Lacks hemolytic activity against sheep erythrocytes. The sequence is that of Papillosin from Halocynthia papillosa (Red sea-squirt).